A 420-amino-acid chain; its full sequence is Transcription factor IIIB 50 kDa subunit (420 aa).

Residues 3–36 (NGSRCPDCGSSELVEDSHYSQSQLVCSDCGCVVT) form a TFIIB-type zinc finger. Zn(2+)-binding residues include Cys-7, Cys-10, Cys-28, and Cys-31. A run of 2 repeats spans residues 72-157 (DLRR…MQMV) and 173-249 (VKSY…SLAQ). Residues 108–114 (AARLQKK) are interaction with target DNA. Positions 316–387 (TAEVETQQQQ…AVTGDEDISD (72 aa)) are disordered. The segment covering 322–336 (QQQQQQQQGQGQGQQ) has biased composition (low complexity). Residue Ser-354 is modified to Phosphoserine. The interval 358–364 (LLPPCML) is required for the formation of a ternary complex with DNA and TBP; not required for interaction with TBP in the absence of DNA. The residue at position 362 (Cys-362) is a Cysteine sulfenic acid (-SOH). The required for interaction with TBP and formation of a ternary complex with DNA and TBP stretch occupies residues 366–420 (PPKRTHTLPPESAVTGDEDISDSEIEQYLRTPQEVRDFERAQAASQAAMRVPNPP).

Belongs to the TFIIB family. Component of TFIIIB complexes. The TFIIIB complex has two activities, alpha and beta. The TFIIIB-alpha activity complex is composed of TBP, BDP1, and a complex containing both BRF2 and at least four stably associated proteins; this complex inhibits the transcription by pol III via its phosphorylation by CK2; YY1 facilitates the TFIIIB-alpha complex formation. Interacts with TBP; this interaction promotes recruitment of BRF2 to TATA box-containing promoters. Interacts with TBP and the BURE sequence (GC-rich sequence downstream from the TATA box) to form a strong ternary complex which is joined by BDP1; this ternary complex stimulates pol III transcription. Forms a trimeric complex composed of TBP, BRF2 and mini-SNAPc complex (SNAP43, SNAP50, and the N-terminal third of SNAP190) on the promoter. Assembly of the TBP-BRF2 complex is stimulated by SNAP190. Interacts with MAF1 and SNAPC4. Post-translationally, in response to oxidative stress, Cys-362 is reversibly oxidized to cysteine sulfenic acid. Oxidation of Cys-362 impairs formation of a ternary complex with TBP and DNA and down-regulates expression of target genes in response to oxidative stress.

The protein localises to the nucleus. In terms of biological role, general activator of RNA polymerase III transcription. Factor exclusively required for RNA polymerase III transcription of genes with promoter elements upstream of the initiation sites. Contributes to the regulation of gene expression; functions as activator in the absence of oxidative stress. Down-regulates expression of target genes in response to oxidative stress. Overexpression protects cells against apoptosis in response to oxidative stress. This is Transcription factor IIIB 50 kDa subunit (Brf2) from Mus musculus (Mouse).